The following is a 157-amino-acid chain: Ribosomal RNA large subunit methyltransferase H (157 aa).

S-adenosyl-L-methionine contacts are provided by residues Leu-73, Gly-105, and 124 to 129 (LSKMTF).

Belongs to the RNA methyltransferase RlmH family. As to quaternary structure, homodimer.

It is found in the cytoplasm. The catalysed reaction is pseudouridine(1915) in 23S rRNA + S-adenosyl-L-methionine = N(3)-methylpseudouridine(1915) in 23S rRNA + S-adenosyl-L-homocysteine + H(+). Functionally, specifically methylates the pseudouridine at position 1915 (m3Psi1915) in 23S rRNA. This is Ribosomal RNA large subunit methyltransferase H from Christiangramia forsetii (strain DSM 17595 / CGMCC 1.15422 / KT0803) (Gramella forsetii).